Here is a 449-residue protein sequence, read N- to C-terminus: tRNA-2-methylthio-N(6)-dimethylallyladenosine synthase (449 aa).

The MTTase N-terminal domain occupies 3–124 (KMLYIKTYGC…LPTMLEKLDS (122 aa)). [4Fe-4S] cluster contacts are provided by Cys12, Cys48, Cys87, Cys163, Cys167, and Cys170. Residues 149–380 (KSPTVSGLVS…QAQLMQQQLE (232 aa)) enclose the Radical SAM core domain. Residues 383–447 (QKLIGKVVPV…ASSLFGEVYA (65 aa)) form the TRAM domain.

This sequence belongs to the methylthiotransferase family. MiaB subfamily. In terms of assembly, monomer. It depends on [4Fe-4S] cluster as a cofactor.

It is found in the cytoplasm. It carries out the reaction N(6)-dimethylallyladenosine(37) in tRNA + (sulfur carrier)-SH + AH2 + 2 S-adenosyl-L-methionine = 2-methylsulfanyl-N(6)-dimethylallyladenosine(37) in tRNA + (sulfur carrier)-H + 5'-deoxyadenosine + L-methionine + A + S-adenosyl-L-homocysteine + 2 H(+). Functionally, catalyzes the methylthiolation of N6-(dimethylallyl)adenosine (i(6)A), leading to the formation of 2-methylthio-N6-(dimethylallyl)adenosine (ms(2)i(6)A) at position 37 in tRNAs that read codons beginning with uridine. In Orientia tsutsugamushi (strain Ikeda) (Rickettsia tsutsugamushi), this protein is tRNA-2-methylthio-N(6)-dimethylallyladenosine synthase.